The primary structure comprises 367 residues: Phthiodiolone/phenolphthiodiolone dimycocerosates ketoreductase (367 aa).

Belongs to the mer family. Phthiodiolone/phenolphthiodiolone dimycocerosates ketoreductase subfamily.

In terms of biological role, catalyzes the reduction of the keto moiety of phthiodiolone dimycocerosates (DIM B) and glycosylated phenolphthiodiolone dimycocerosates to form the intermediate compounds phthiotriol and glycosylated phenolphthiotriol dimycocerosates during phthiocerol dimycocerosates (DIM A) and glycosylated phenolphthiocerol dimycocerosates (PGL) biosynthesis. The polypeptide is Phthiodiolone/phenolphthiodiolone dimycocerosates ketoreductase (Mycobacterium kansasii).